Here is a 285-residue protein sequence, read N- to C-terminus: MEFTMNIAANHNLENKLIIITGAGGVLCSFLAKQLAYTKANIALLDLNFEAADKVAKEINQSGGKAKAYKTNVLELENIKEVRNQIETDFGTCDILINGAGGNNPKATTDNEFHQFDLNETTRTFFDLDKSGIEFVFNLNYLGSLLPTQVFAKDMLGKQGANIINISSMNAFTPLTKIPAYSGAKAAISNFTQWLAVYFSKVGIRCNAIAPGFLVSNQNLALLFDTEGKPTDRANKILTNTPMGRFGESEELLGALLFLIDENYSAFVNGVVLPVDGGFSAYSGV.

Residue serine 168 participates in substrate binding. Tyrosine 181 serves as the catalytic Proton acceptor.

The protein belongs to the short-chain dehydrogenases/reductases (SDR) family.

This is an uncharacterized protein from Haemophilus influenzae (strain ATCC 51907 / DSM 11121 / KW20 / Rd).